The chain runs to 126 residues: Small ribosomal subunit protein uS13 (126 aa).

The disordered stretch occupies residues 92-126; the sequence is HRRGLPANGQRTHTNARTRKGPRKGMLQRRPAATK. Over residues 105–118 the composition is skewed to basic residues; it reads TNARTRKGPRKGML.

Belongs to the universal ribosomal protein uS13 family. As to quaternary structure, part of the 30S ribosomal subunit. Forms a loose heterodimer with protein S19. Forms two bridges to the 50S subunit in the 70S ribosome.

In terms of biological role, located at the top of the head of the 30S subunit, it contacts several helices of the 16S rRNA. In the 70S ribosome it contacts the 23S rRNA (bridge B1a) and protein L5 of the 50S subunit (bridge B1b), connecting the 2 subunits; these bridges are implicated in subunit movement. Contacts the tRNAs in the A and P-sites. The protein is Small ribosomal subunit protein uS13 of Sorangium cellulosum (strain So ce56) (Polyangium cellulosum (strain So ce56)).